Reading from the N-terminus, the 836-residue chain is Pentatricopeptide repeat-containing protein At1g79490, mitochondrial (836 aa).

The transit peptide at 1–85 (MIRGRTAKVI…QCRSIVRRFC (85 aa)) directs the protein to the mitochondrion. PPR repeat units follow at residues 204–238 (SDEC…SSSH), 242–276 (SFNA…GCKI), 277–311 (DTQT…DSLL), 312–346 (DGST…KLRP), 347–381 (SFSV…GHRP), 382–416 (SATM…GFRP), 417–451 (NFGL…GFLP), 452–486 (TPST…GLRP), 487–521 (GLSS…GYSV), 528–555 (VLMI…GIKT), 556–590 (NNFI…AGKV), and 591–625 (DLVL…KHKA). Residues 710-786 (LDVRNLSVGA…APGELVMEWF (77 aa)) form the Smr domain.

The protein belongs to the PPR family. P subfamily.

It localises to the mitochondrion. This Arabidopsis thaliana (Mouse-ear cress) protein is Pentatricopeptide repeat-containing protein At1g79490, mitochondrial (EMB2217).